The primary structure comprises 205 residues: uncharacterized protein (205 aa).

The stretch at 10–75 (QDLLSAVDQQ…AANLMTVMTD (66 aa)) forms a coiled coil. Positions 108–141 (MPLPSSNTNNDQTSPPASGKTSETPKKNPTNAMF) are disordered. Positions 111-141 (PSSNTNNDQTSPPASGKTSETPKKNPTNAMF) are enriched in polar residues.

Belongs to the asfivirus K205R family.

The protein localises to the host cytoplasm. Functionally, induces host endoplasmic reticulum stress and consequently activates autophagy and NF-kappa-B signaling pathway. In turn, may induce autophagy-mediated STING1 degradation and innate immune evasion. This is an uncharacterized protein from Ornithodoros (relapsing fever ticks).